A 125-amino-acid polypeptide reads, in one-letter code: Small ribosomal subunit protein uS13 (125 aa).

The segment at 95 to 125 is disordered; the sequence is GLPLRGQRTKTNARTRKGKRKTVANKKIASK.

Belongs to the universal ribosomal protein uS13 family. In terms of assembly, part of the 30S ribosomal subunit. Forms a loose heterodimer with protein S19. Forms two bridges to the 50S subunit in the 70S ribosome.

Its function is as follows. Located at the top of the head of the 30S subunit, it contacts several helices of the 16S rRNA. In the 70S ribosome it contacts the 23S rRNA (bridge B1a) and protein L5 of the 50S subunit (bridge B1b), connecting the 2 subunits; these bridges are implicated in subunit movement. Contacts the tRNAs in the A and P-sites. The protein is Small ribosomal subunit protein uS13 of Borreliella burgdorferi (strain ATCC 35210 / DSM 4680 / CIP 102532 / B31) (Borrelia burgdorferi).